A 244-amino-acid polypeptide reads, in one-letter code: Small ribosomal subunit protein eS4 (244 aa).

Residues 1–14 show a composition bias toward basic residues; sequence MANKGPRKHLKRLP. A disordered region spans residues 1–36; that stretch reads MANKGPRKHLKRLPAPKNWQISRKTNKYTTRPSAGP. A compositionally biased stretch (polar residues) spans 19-32; the sequence is WQISRKTNKYTTRP. One can recognise an S4 RNA-binding domain in the interval 43-106; it reads LPLLLVLRDL…NESFLVVLDE (64 aa).

This sequence belongs to the eukaryotic ribosomal protein eS4 family.

The chain is Small ribosomal subunit protein eS4 from Methanococcus aeolicus (strain ATCC BAA-1280 / DSM 17508 / OCM 812 / Nankai-3).